The primary structure comprises 852 residues: Protein SBE22 (852 aa).

Residues 1–158 (MTSIQERGTS…ADKSKINTFP (158 aa)) form a disordered region. A compositionally biased stretch (basic and acidic residues) spans 15–26 (SLKEGEASDRSS). Positions 43–61 (PPSQTTLGRSRAGSNTMNK) are enriched in polar residues. Ser-72 carries the post-translational modification Phosphoserine. Over residues 74-96 (NLLSNMNCSDNGNGGNMLNSFVN) the composition is skewed to polar residues. A compositionally biased stretch (low complexity) spans 124-139 (TTEVFSSTSASSSLGD). Phosphoserine is present on Ser-201. The segment at 206 to 248 (AAEKTMNKSRHSYQEQFSSKKSQSSLLNSKQRSRAKSQTCSST) is disordered. Positions 224-235 (SKKSQSSLLNSK) are enriched in low complexity. A phosphoserine mark is found at Ser-459, Ser-517, and Ser-520.

The protein belongs to the SBE2 family.

The protein resides in the cytoplasm. It localises to the golgi apparatus. In terms of biological role, with SBE2, is involved in cell wall integrity and polarity processes like bud growth, through the transport of CHS3 and UTR2 to sites of growth. In Saccharomyces cerevisiae (strain YJM789) (Baker's yeast), this protein is Protein SBE22 (SBE22).